The following is a 145-amino-acid chain: Large ribosomal subunit protein uL13 (145 aa).

The protein belongs to the universal ribosomal protein uL13 family. Part of the 50S ribosomal subunit.

In terms of biological role, this protein is one of the early assembly proteins of the 50S ribosomal subunit, although it is not seen to bind rRNA by itself. It is important during the early stages of 50S assembly. The protein is Large ribosomal subunit protein uL13 of Bacillus licheniformis (strain ATCC 14580 / DSM 13 / JCM 2505 / CCUG 7422 / NBRC 12200 / NCIMB 9375 / NCTC 10341 / NRRL NRS-1264 / Gibson 46).